The primary structure comprises 630 residues: Tyrosinase (630 aa).

Cu cation-binding residues include His-69, His-92, His-101, His-317, His-321, and His-360. Positions 90 to 92 (CVH) form a cross-link, 2'-(S-cysteinyl)-histidine (Cys-His).

It belongs to the tyrosinase family. Cu(2+) is required as a cofactor.

The enzyme catalyses 2 L-dopa + O2 = 2 L-dopaquinone + 2 H2O. It carries out the reaction L-tyrosine + O2 = L-dopaquinone + H2O. Functionally, this is a copper-containing oxidase that functions in the formation of pigments such as melanins and other polyphenolic compounds. This is Tyrosinase (tyr1) from Aspergillus fumigatus (strain ATCC MYA-4609 / CBS 101355 / FGSC A1100 / Af293) (Neosartorya fumigata).